The sequence spans 254 residues: Probable membrane transporter protein YjnA (254 aa).

6 helical membrane-spanning segments follow: residues 5 to 25 (IILM…GGAA), 75 to 95 (AIGS…FPAF), 105 to 125 (HALG…LFLD), 143 to 163 (ALTI…SIGS), 187 to 207 (IAHA…FGSV), and 209 to 229 (YMLA…GSHL).

The protein belongs to the 4-toluene sulfonate uptake permease (TSUP) (TC 2.A.102) family.

The protein resides in the cell membrane. In Bacillus subtilis (strain 168), this protein is Probable membrane transporter protein YjnA (yjnA).